A 424-amino-acid chain; its full sequence is Enolase (424 aa).

Gln162 is a (2R)-2-phosphoglycerate binding site. The active-site Proton donor is the Glu204. Positions 241, 284, and 311 each coordinate Mg(2+). The (2R)-2-phosphoglycerate site is built by Lys336, Arg365, Ser366, and Lys387. The active-site Proton acceptor is Lys336.

The protein belongs to the enolase family. It depends on Mg(2+) as a cofactor.

Its subcellular location is the cytoplasm. It localises to the secreted. It is found in the cell surface. The catalysed reaction is (2R)-2-phosphoglycerate = phosphoenolpyruvate + H2O. Its pathway is carbohydrate degradation; glycolysis; pyruvate from D-glyceraldehyde 3-phosphate: step 4/5. Catalyzes the reversible conversion of 2-phosphoglycerate (2-PG) into phosphoenolpyruvate (PEP). It is essential for the degradation of carbohydrates via glycolysis. The chain is Enolase from Rhizobium johnstonii (strain DSM 114642 / LMG 32736 / 3841) (Rhizobium leguminosarum bv. viciae).